The primary structure comprises 773 residues: MILDADYITEDGKPVIRVFKKEKGEFKIDYDRDFEPYIYALLKDDSAIEDIKKITAERHGTTVRVTRAERVKKKFLGRPVEVWKLYFTHPQDVPAIRDKIREHPAVVDIYEYDIPFAKRYLIDRGLIPMEGDEELRMLAFDIETLYHEGEEFGEGPILMISYADEEGARVITWKNIDLPYVESVSTEKEMIKRFLKVIQEKDPDVLITYNGDNFDFAYLKKRSEMLGVKFILGRDGSEPKIQRMGDRFAVEVKGRIHFDLYPVIRRTINLPTYTLETVYEPVFGQPKEKVYAEEIARAWESGEGLERVARYSMEDAKATYELGKEFFPMEAQLSRLVGQSLWDVSRSSTGNLVEWFLLRKAYERNDVAPNKPDERELARRTESYAGGYVKEPEKGLWENIVYLDYKSLYPSIIITHNVSPDTLNREGCREYDVAPQVGHRFCKDFPGFIPSLLGDLLEERQKVKKKMKATVDPIERKLLDYRQRAIKILANSYYGYYAYANARWYCRECAESVTAWGRQYIETTMREIEEKFGFKVLYADTDGFFATIPGADAETVKNKAKEFLNYINPRLPGLLELEYEGFYRRGFFVTKKKYAVIDEEDKITTRGLEIVRRDWSEIAKETQARVLEAILKHGDVEEAVRIVKEVTEKLSRHEVPPEKLVIYEQITRDLRSYRATGPHVAVAKRLAARGIKIRPGTVISYIVLKGPGRVGDRAIPFDEFDPAKHRYDAEYYIENQVLPAVERILRAFGYRKEDLRYQKTKQAGLGAWLKPKT.

An N-terminal domain region spans residues 1–131 (MILDADYITE…IDRGLIPMEG (131 aa)). The interval 133-385 (EELRMLAFDI…ELARRTESYA (253 aa)) is exonuclease domain. Positions 141, 143, and 315 each coordinate Mg(2+). The tract at residues 390–773 (KEPEKGLWEN…GLGAWLKPKT (384 aa)) is polymerase domain. Disulfide bonds link Cys-428-Cys-442 and Cys-506-Cys-509.

It belongs to the DNA polymerase type-B family. Requires Mg(2+) as cofactor.

The enzyme catalyses DNA(n) + a 2'-deoxyribonucleoside 5'-triphosphate = DNA(n+1) + diphosphate. Its activity is regulated as follows. DNA polymerase activity strongly inhibited by uracil-containing oligonucleotides. Thermostable DNA polymerase. In addition to polymerase activity, this DNA polymerase exhibits 3' to 5' exonuclease activity. The polypeptide is DNA polymerase (pol) (Desulfurococcus sp. (strain Tok)).